A 159-amino-acid chain; its full sequence is MEKIASFTINHLELLPGVYVSRQDKFGDTVLTTFDIRMNRPNFEPTMNTAEMHAIEHLAATFLRNHKDYADKTVYFGPMGCRTGFYLILHGDYKSKDIVPLLTELYKFMAEFEGDIPGASAKDCGNYLDMNLPMAKYLANKFLNDILLNITEKNLVYPN.

Residues H53, H57, and C124 each contribute to the Fe cation site.

Belongs to the LuxS family. Homodimer. Requires Fe cation as cofactor.

The enzyme catalyses S-(5-deoxy-D-ribos-5-yl)-L-homocysteine = (S)-4,5-dihydroxypentane-2,3-dione + L-homocysteine. In terms of biological role, involved in the synthesis of autoinducer 2 (AI-2) which is secreted by bacteria and is used to communicate both the cell density and the metabolic potential of the environment. The regulation of gene expression in response to changes in cell density is called quorum sensing. Catalyzes the transformation of S-ribosylhomocysteine (RHC) to homocysteine (HC) and 4,5-dihydroxy-2,3-pentadione (DPD). This is S-ribosylhomocysteine lyase from Clostridium beijerinckii (strain ATCC 51743 / NCIMB 8052) (Clostridium acetobutylicum).